We begin with the raw amino-acid sequence, 577 residues long: Arginine--tRNA ligase (577 aa).

Positions Pro122–His132 match the 'HIGH' region motif.

It belongs to the class-I aminoacyl-tRNA synthetase family. Monomer.

The protein resides in the cytoplasm. It catalyses the reaction tRNA(Arg) + L-arginine + ATP = L-arginyl-tRNA(Arg) + AMP + diphosphate. This chain is Arginine--tRNA ligase, found in Haemophilus influenzae (strain 86-028NP).